The sequence spans 65 residues: uncharacterized protein (65 aa).

Residues 1–30 (MPAASLESLLPPPPGKLPSPPLRPHGKFQR) form a disordered region. Residues 10 to 23 (LPPPPGKLPSPPLR) are compositionally biased toward pro residues.

This is an uncharacterized protein from Homo sapiens (Human).